Reading from the N-terminus, the 402-residue chain is MSEPIDILIAGAGIGGLSCALALHQAGIGKVTLLESSSEIRPLGVGINIQPAAVEALAELGLGPALAATAIPTHELRYIDQSGATVWSEPRGVEAGNAYPQYSIHRGELQMILLAAVRERLGQQAVRTGLGVERIEERDGRVLIGARDGHGKPQALGADVLVGADGIHSAVRAHLHPDQRPLSHGGITMWRGVTEFDRFLDGKTMIVANDEHWSRLVAYPISARHAAEGKSLVNWVCMVPSAAVGQLDNEADWNRDGRLEDVLPFFADWDLGWFDIRDLLTRNQLILQYPMVDRDPLPHWGRGRITLLGDAAHLMYPMGANGASQAILDGIELAAALARNADVAAALREYEEARRPTANKIILANREREKEEWAAASRPKTEKSAALEAITGSYRNQVERPR.

Residues 14-15 (IG), 35-36 (ES), 43-45 (LGV), Arg-106, Val-132, Arg-191, and Asp-310 each bind FAD. Over residues 368–385 (REKEEWAAASRPKTEKSA) the composition is skewed to basic and acidic residues. A disordered region spans residues 368 to 402 (REKEEWAAASRPKTEKSAALEAITGSYRNQVERPR).

Monomer in solution. Probably interacts transiently with PhzM. FAD serves as cofactor.

The catalysed reaction is 5-methyl-phenazine-1-carboxylate + NADH + O2 + 2 H(+) = pyocyanin + CO2 + NAD(+) + H2O. It participates in secondary metabolite biosynthesis; pyocyanine biosynthesis. Its function is as follows. Involved in the biosynthesis of pyocyanine, a blue-pigmented phenazine derivative, which plays a role in virulence. Catalyzes the oxidative decarboxylation of 5-methylphenazine-1-carboxylate (5-methyl-PCA) to pyocyanine. Can also act on phenazine-1-carboxylate (PCA), converting it into 1-hydroxyphenazine (1-HP). However, PCA is a poor substrate. This chain is 5-methylphenazine-1-carboxylate 1-monooxygenase, found in Pseudomonas aeruginosa (strain ATCC 15692 / DSM 22644 / CIP 104116 / JCM 14847 / LMG 12228 / 1C / PRS 101 / PAO1).